The primary structure comprises 265 residues: Non-seed lectin (265 aa).

Positions 1 to 21 (MALYRTKELVSLVSIMFVLLA) form a signal peptide, or 23. N-linked (GlcNAc...) asparagine glycans are attached at residues N59 and N127.

This sequence belongs to the leguminous lectin family. Monomer. In terms of tissue distribution, most highly expressed in the epidermal layer of developing shoot tips.

The polypeptide is Non-seed lectin (Pisum sativum (Garden pea)).